We begin with the raw amino-acid sequence, 879 residues long: RNA-directed RNA polymerase (879 aa).

259-266 (GLPYVGRT) serves as a coordination point for GTP. The RdRp catalytic domain occupies 398 to 598 (LVYADNIYIV…DKERLFCSAA (201 aa)). Residues 846-879 (GAGTSRPMGMEAPTRSKNAVKMAKRRQRQKESRQ) form a disordered region.

In terms of assembly, interacts with VP3 in the cytoplasm. In terms of processing, may exist in multiple phosphorylated forms.

The protein resides in the virion. The enzyme catalyses RNA(n) + a ribonucleoside 5'-triphosphate = RNA(n+1) + diphosphate. Its function is as follows. RNA-dependent RNA polymerase which is found both free and covalently attached to the genomic RNA. May also contain guanylyl and methyl transferase activities. In Gallus gallus (Chicken), this protein is RNA-directed RNA polymerase (VP1).